The following is a 237-amino-acid chain: Zinc finger AN1 domain-containing stress-associated protein 14 (237 aa).

Residues 1–31 (MATKRKCPANGDDGGVADLEPVAGGSFASPP) form a disordered region. Residues 171–217 (QPEANRCATCRRKVGLTGFKCRCGGTFCGGHRYADEHGCGFDYKSSG) form an AN1-type zinc finger. Positions 177, 180, 191, 193, 198, 201, 207, and 209 each coordinate Zn(2+).

In terms of biological role, may be involved in environmental stress response. This is Zinc finger AN1 domain-containing stress-associated protein 14 (SAP14) from Oryza sativa subsp. japonica (Rice).